Consider the following 449-residue polypeptide: UDP-N-acetylmuramate--L-alanine ligase (449 aa).

118 to 124 (GTHGKTT) is an ATP binding site.

It belongs to the MurCDEF family.

Its subcellular location is the cytoplasm. It catalyses the reaction UDP-N-acetyl-alpha-D-muramate + L-alanine + ATP = UDP-N-acetyl-alpha-D-muramoyl-L-alanine + ADP + phosphate + H(+). It functions in the pathway cell wall biogenesis; peptidoglycan biosynthesis. Its function is as follows. Cell wall formation. The sequence is that of UDP-N-acetylmuramate--L-alanine ligase from Flavobacterium johnsoniae (strain ATCC 17061 / DSM 2064 / JCM 8514 / BCRC 14874 / CCUG 350202 / NBRC 14942 / NCIMB 11054 / UW101) (Cytophaga johnsonae).